Reading from the N-terminus, the 488-residue chain is Inosine-5'-monophosphate dehydrogenase (488 aa).

CBS domains lie at Val95–Ile153 and Met157–Glu216. Residues Asp250 and Gly300–Gly302 each bind NAD(+). K(+) is bound by residues Gly302 and Gly304. Position 305 (Ser305) interacts with IMP. Cys307 contributes to the K(+) binding site. Cys307 serves as the catalytic Thioimidate intermediate. IMP is bound by residues Asp340–Gly342, Gly363–Ser364, and Tyr387–Gly391. Arg403 serves as the catalytic Proton acceptor. An IMP-binding site is contributed by Glu417. The disordered stretch occupies residues Gly468–Phe488. K(+) contacts are provided by Glu471, Ser472, and His473. Positions His475–Phe488 are enriched in polar residues.

Belongs to the IMPDH/GMPR family. In terms of assembly, homotetramer. The cofactor is K(+).

The enzyme catalyses IMP + NAD(+) + H2O = XMP + NADH + H(+). It functions in the pathway purine metabolism; XMP biosynthesis via de novo pathway; XMP from IMP: step 1/1. Mycophenolic acid (MPA) is a non-competitive inhibitor that prevents formation of the closed enzyme conformation by binding to the same site as the amobile flap. In contrast, mizoribine monophosphate (MZP) is a competitive inhibitor that induces the closed conformation. MPA is a potent inhibitor of mammalian IMPDHs but a poor inhibitor of the bacterial enzymes. MZP is a more potent inhibitor of bacterial IMPDH. Functionally, catalyzes the conversion of inosine 5'-phosphate (IMP) to xanthosine 5'-phosphate (XMP), the first committed and rate-limiting step in the de novo synthesis of guanine nucleotides, and therefore plays an important role in the regulation of cell growth. The polypeptide is Inosine-5'-monophosphate dehydrogenase (Staphylococcus aureus (strain MW2)).